The sequence spans 317 residues: MPVLGSQRRLLGSLNCTPPATFPLTLAPNRTGPQCLEVSIPDGLFLSLGLVSLVENVLVVAAIAKNRNLHSPMYYFICCLAMSDLLVSVSNVLETAVMLLLEAGALAAQAAVVQQLDNVIDVLICGSMVSSLCFLGAIAVDRYISIFYALRYHSVVTLPRAWRIIAAIWVASILTSLLFITYYNHTVVLLCLVGFFIAMLALMAVLYVHMLARACQHARGIARLQKRQRPIHQGFGLKGAATLTILLGVFFLCWGPFFLHLSLIVLCPQHPTCGCIFKNFNLFLALIICNAIVDPLIYAFRSQELRKTLQEVLQCSW.

The Extracellular segment spans residues 1–37; the sequence is MPVLGSQRRLLGSLNCTPPATFPLTLAPNRTGPQCLE. The N-linked (GlcNAc...) asparagine glycan is linked to Asn-29. The helical transmembrane segment at 38–63 threads the bilayer; it reads VSIPDGLFLSLGLVSLVENVLVVAAI. Topologically, residues 64-72 are cytoplasmic; that stretch reads AKNRNLHSP. Residues 73–93 form a helical membrane-spanning segment; that stretch reads MYYFICCLAMSDLLVSVSNVL. Topologically, residues 94-118 are extracellular; it reads ETAVMLLLEAGALAAQAAVVQQLDN. Residues 119-140 form a helical membrane-spanning segment; it reads VIDVLICGSMVSSLCFLGAIAV. At 141-163 the chain is on the cytoplasmic side; the sequence is DRYISIFYALRYHSVVTLPRAWR. A helical membrane pass occupies residues 164-183; the sequence is IIAAIWVASILTSLLFITYY. Residues 184-191 are Extracellular-facing; it reads NHTVVLLC. Residues 192-211 traverse the membrane as a helical segment; that stretch reads LVGFFIAMLALMAVLYVHML. The Cytoplasmic portion of the chain corresponds to 212-240; sequence ARACQHARGIARLQKRQRPIHQGFGLKGA. A helical membrane pass occupies residues 241–266; it reads ATLTILLGVFFLCWGPFFLHLSLIVL. Topologically, residues 267–279 are extracellular; sequence CPQHPTCGCIFKN. The helical transmembrane segment at 280–300 threads the bilayer; that stretch reads FNLFLALIICNAIVDPLIYAF. Residues 301–317 are Cytoplasmic-facing; sequence RSQELRKTLQEVLQCSW. Cys-315 is lipidated: S-palmitoyl cysteine.

The protein belongs to the G-protein coupled receptor 1 family. In terms of assembly, interacts with MGRN1, but does not undergo MGRN1-mediated ubiquitination; this interaction competes with GNAS-binding and thus inhibits agonist-induced cAMP production. Interacts with OPN3; the interaction results in a decrease in MC1R-mediated cAMP signaling and ultimately a decrease in melanin production in melanocytes.

The protein localises to the cell membrane. In terms of biological role, receptor for MSH (alpha, beta and gamma) and ACTH. The activity of this receptor is mediated by G proteins which activate adenylate cyclase. Mediates melanogenesis, the production of eumelanin (black/brown) and phaeomelanin (red/yellow), via regulation of cAMP signaling in melanocytes. This is Melanocyte-stimulating hormone receptor (MC1R) from Dama dama (Fallow deer).